A 600-amino-acid polypeptide reads, in one-letter code: Probable translation initiation factor IF-2 (600 aa).

Residues 13-228 (LRTPIVAVLG…VLMGLAQRYM (216 aa)) form the tr-type G domain. The G1 stretch occupies residues 22-29 (GHVDHGKT). 22–29 (GHVDHGKT) serves as a coordination point for GTP. Residues 47–51 (AITQH) are G2. Residues 84-87 (DTPG) form a G3 region. Residues 84–88 (DTPGH) and 138–141 (NKID) contribute to the GTP site. The tract at residues 138–141 (NKID) is G4. The segment at 140–162 (IDTTPGWNPNPDAPVQGTYDDQS) is disordered. Positions 206–208 (SAE) are G5.

This sequence belongs to the TRAFAC class translation factor GTPase superfamily. Classic translation factor GTPase family. IF-2 subfamily.

Function in general translation initiation by promoting the binding of the formylmethionine-tRNA to ribosomes. Seems to function along with eIF-2. The protein is Probable translation initiation factor IF-2 of Halobacterium salinarum (strain ATCC 700922 / JCM 11081 / NRC-1) (Halobacterium halobium).